The primary structure comprises 73 residues: Frenatin 3.1 (73 aa).

The signal sequence occupies residues 1-22 (MHFLKKSIFLVLFLGLVSLSIC). The propeptide occupies 23–46 (EKEKREDQNEEEVDENEEASEEKR). Residues 25 to 45 (EKREDQNEEEVDENEEASEEK) are disordered. Acidic residues predominate over residues 30–42 (QNEEEVDENEEAS).

Expressed by the skin glands.

Its subcellular location is the secreted. Its function is as follows. Antimicrobial peptide with activity against both Gram-positive and Gram-negative bacteria. The protein is Frenatin 3.1 of Nyctimystes infrafrenatus (White-lipped tree frog).